The sequence spans 277 residues: MIGARVFCITTTALRRSPIFFFPKIPTRPVFRLSPATRPIVAMSTTSKNQEELDSIFKQKRVVRSTVRKSLKAMDPSLRTQQDEAIQKTVLEAPWFKSCKGLCAYISCKSLNEVDTSKILSEILQHPDSNTQKKLYVPWVEDKNSNMRMLHISHMEDLVANSMNILEPAPVDAQGNDREDVLQADEPIDLFILPGLAFDRCGRRLGRGGGYYDTFLKRYQDRAKEKGWRYPLMVALSYSPQILEDGSIPVTPNDVLIDALVTPSGVVPITPRATESM.

The N-terminal 48 residues, Met1–Lys48, are a transit peptide targeting the mitochondrion. Lys60–Arg64 lines the ATP pocket. Substrate is bound by residues Glu113 and Arg207–Tyr211. Residues Gly206–Asp213 and Asp254 contribute to the ATP site.

This sequence belongs to the 5-formyltetrahydrofolate cyclo-ligase family. As to quaternary structure, monomer.

The protein resides in the mitochondrion. It catalyses the reaction (6S)-5-formyl-5,6,7,8-tetrahydrofolate + ATP = (6R)-5,10-methenyltetrahydrofolate + ADP + phosphate. In terms of biological role, contributes to tetrahydrofolate metabolism and photorespiration through the regulation of serine hydroxymethyltransferase. Prefers the pentalutamyl to the monoglutamyl form of 5-formyltetrahydrofolate. The protein is 5-formyltetrahydrofolate cyclo-ligase, mitochondrial (5FCL) of Arabidopsis thaliana (Mouse-ear cress).